The chain runs to 764 residues: Complement factor B (764 aa).

The first 25 residues, 1 to 25 (MGSNLSPQLCLMPFILGLLSGGVTT), serve as a signal peptide directing secretion. 3 consecutive Sushi domains span residues 35-100 (GSCS…ECRA), 101-160 (IHCP…ICDN), and 163-220 (GYCS…SCQD). Cystine bridges form between Cys-37–Cys-76, Cys-62–Cys-98, Cys-103–Cys-145, Cys-131–Cys-158, Cys-165–Cys-205, and Cys-191–Cys-218. Asn-122 and Asn-142 each carry an N-linked (GlcNAc...) asparagine glycan. The region spanning 270 to 469 (NIYLVLDGSD…NLEDVFYQMI (200 aa)) is the VWFA domain. 2 residues coordinate Mg(2+): Ser-278 and Ser-280. Ser-278 and Ser-280 together coordinate Mn(2+). Asn-285 carries an N-linked (GlcNAc...) asparagine glycan. Lys-291 carries N-linked (Glc) (glycation) lysine glycosylation. Mg(2+) is bound at residue Thr-353. Thr-353 contributes to the Mn(2+) binding site. N-linked (GlcNAc...) asparagine glycosylation occurs at Asn-378. Residues 477–757 (LCGMVWEHRK…VLPWLKEKLQ (281 aa)) enclose the Peptidase S1 domain. 5 disulfides stabilise this stretch: Cys-478/Cys-596, Cys-511/Cys-527, Cys-599/Cys-615, Cys-656/Cys-682, and Cys-695/Cys-725. Catalysis depends on charge relay system residues His-526 and Asp-576. Ser-699 serves as the catalytic Charge relay system.

It belongs to the peptidase S1 family. Monomer. Interacts with complement C3b; this interaction is dependent on the presence of Mg(2+). In terms of assembly, catalytic component of the C3 convertase of the alternative complement pathway, also named C3bBb, composed of complement factor B Bb and complement C3b. Catalytic component of the C5 convertase of the alternative complement pathway, also named C3bBb3b, composed of complement factor B Bb and additional molecules of complement C3b. Interacts to CFP; this interaction contributes to the stabilization of the active C3-convertase enzyme complex. Mg(2+) is required as a cofactor. The cofactor is Mn(2+). Post-translationally, cleaved by CFD following activation of the alternative complement system, generating Ba and Bb chains. Cleavage and activation takes place when CFB is already associated with complement C3b.

The protein resides in the secreted. It is found in the cell surface. It catalyses the reaction Cleavage of Arg-|-Ser bond in complement component C3 alpha-chain to yield C3a and C3b, and Arg-|-Xaa bond in complement component C5 alpha-chain to yield C5a and C5b.. In terms of biological role, precursor of the catalytic component of the C3 and C5 convertase complexes of the alternative pathway of the complement system, a cascade of proteins that leads to phagocytosis and breakdown of pathogens and signaling that strengthens the adaptive immune system. The alternative complement pathway acts as an amplification loop that enhances other complement pathways (classical, lectin and GZMK) by promoting formation of additional C3 and C5 convertases. CFB is cleaved and activated by CFD to generate Ba and Bb chains; Bb chain constituting the catalytic component of the C3 and C5 convertases. Its function is as follows. Serine protease component of the complement C3 and C5 convertase complexes of the alternative complement pathway. Following cleavage and activation by factor D (CFD), forms the C3 convertase together with complement C3b. As part of the C3 convertase, cleaves and activates C3 into C3a anaphylatoxin and C3b opsonin, the next components of the complement pathways. When an additional complement C3b molecule binds to the C3 convertase, forms the C5 convertase, which cleaves and activates C5 into C5a anaphylatoxin and C5b component of the membrane attack complex. Involved in proliferation and differentiation of preactivated B-lymphocytes, rapid spreading of peripheral blood monocytes, stimulation of lymphocyte blastogenesis and lysis of erythrocytes. The protein is Complement factor B of Homo sapiens (Human).